The chain runs to 166 residues: Large ribosomal subunit protein uL11 (166 aa).

The protein belongs to the universal ribosomal protein uL11 family.

The chain is Large ribosomal subunit protein uL11 (rpl12) from Dictyostelium discoideum (Social amoeba).